A 78-amino-acid chain; its full sequence is U7-lycotoxin-Ls1a (78 aa).

The N-terminal stretch at 1-22 is a signal peptide; the sequence is MKLIIFTGLALLLIVSLIDVEA. Residues 23 to 26 constitute a propeptide that is removed on maturation; sequence QNEG.

The protein belongs to the neurotoxin 19 (CSTX) family. 07 (U7-Lctx) subfamily. Post-translationally, contains 4 disulfide bonds. Expressed by the venom gland.

Its subcellular location is the secreted. This is U7-lycotoxin-Ls1a from Lycosa singoriensis (Wolf spider).